The primary structure comprises 312 residues: Olfactory receptor 51B5 (312 aa).

The Extracellular portion of the chain corresponds to 1–23 (MSSSGSSHPFLLTGFPGLEEAHH). A helical transmembrane segment spans residues 24–44 (WISVFFLFMYISILFGNGTLL). Residues 45–52 (LLIKEDHN) lie on the Cytoplasmic side of the membrane. Residues 53–73 (LHEPMYFFLAMLAATDLGLAL) traverse the membrane as a helical segment. Over 74–97 (TTMPTVLGVLWLDHREIGSAACFS) the chain is Extracellular. The cysteines at positions 95 and 187 are disulfide-linked. The helical transmembrane segment at 98–118 (QAYFIHSLSFLESGILLAMAY) threads the bilayer. The Cytoplasmic segment spans residues 119-137 (DRFIAICNPLRYTSVLTNT). A helical transmembrane segment spans residues 138 to 158 (RVVKIGLGVLMRGFVSVVPPI). Over 159-194 (RPLYFFLYCHSHVLSHAFCLHQDVIKLACADTTFNR) the chain is Extracellular. A helical transmembrane segment spans residues 195 to 215 (LYPAVLVVFIFVLDYLIIFIS). Topologically, residues 216 to 235 (YVLILKTVLSIASREERAKA) are cytoplasmic. Residues 236–256 (LITCVSHICCVLVFYVTVIGL) traverse the membrane as a helical segment. Topologically, residues 257 to 271 (SLIHRFGKQVPHIVH) are extracellular. A helical transmembrane segment spans residues 272 to 292 (LIMSYAYFLFPPLMNPITYSV). The Cytoplasmic segment spans residues 293-312 (KTKQIQNAILHLFTTHRIGT).

Belongs to the G-protein coupled receptor 1 family.

It localises to the cell membrane. Functionally, odorant receptor. The protein is Olfactory receptor 51B5 (OR51B5) of Homo sapiens (Human).